We begin with the raw amino-acid sequence, 718 residues long: Catalase-peroxidase (718 aa).

The segment at residues 98 to 219 (WHAAGTYRMG…LAATEMGLIY (122 aa)) is a cross-link (tryptophyl-tyrosyl-methioninium (Trp-Tyr) (with M-245)). Catalysis depends on His-99, which acts as the Proton acceptor. Positions 219–245 (YVNPEGPQASGDPRSAAPFIRATFGNM) form a cross-link, tryptophyl-tyrosyl-methioninium (Tyr-Met) (with W-98). His-260 contributes to the heme b binding site.

It belongs to the peroxidase family. Peroxidase/catalase subfamily. As to quaternary structure, homodimer or homotetramer. Heme b serves as cofactor. Formation of the three residue Trp-Tyr-Met cross-link is important for the catalase, but not the peroxidase activity of the enzyme.

The catalysed reaction is H2O2 + AH2 = A + 2 H2O. The enzyme catalyses 2 H2O2 = O2 + 2 H2O. Functionally, bifunctional enzyme with both catalase and broad-spectrum peroxidase activity. This is Catalase-peroxidase from Acinetobacter baumannii (strain ACICU).